The following is a 523-amino-acid chain: 2-isopropylmalate synthase (523 aa).

The Pyruvate carboxyltransferase domain maps to 5 to 267; that stretch reads VIIFDTTLRD…HTNINHHEIW (263 aa). Mn(2+) contacts are provided by D14, H202, H204, and N238. The tract at residues 392–523 is regulatory domain; it reads RLDYFSVQSG…QNKENNKETV (132 aa).

The protein belongs to the alpha-IPM synthase/homocitrate synthase family. LeuA type 1 subfamily. Homodimer. It depends on Mn(2+) as a cofactor.

It localises to the cytoplasm. It carries out the reaction 3-methyl-2-oxobutanoate + acetyl-CoA + H2O = (2S)-2-isopropylmalate + CoA + H(+). The protein operates within amino-acid biosynthesis; L-leucine biosynthesis; L-leucine from 3-methyl-2-oxobutanoate: step 1/4. Catalyzes the condensation of the acetyl group of acetyl-CoA with 3-methyl-2-oxobutanoate (2-ketoisovalerate) to form 3-carboxy-3-hydroxy-4-methylpentanoate (2-isopropylmalate). The sequence is that of 2-isopropylmalate synthase from Salmonella dublin (strain CT_02021853).